A 238-amino-acid chain; its full sequence is 3-dehydroquinate dehydratase (238 aa).

3-dehydroquinate-binding positions include 35–37 (ELR) and R68. H131 functions as the Proton donor/acceptor in the catalytic mechanism. The active-site Schiff-base intermediate with substrate is K158. Residues R200 and Q223 each coordinate 3-dehydroquinate.

It belongs to the type-I 3-dehydroquinase family. As to quaternary structure, homodimer.

It carries out the reaction 3-dehydroquinate = 3-dehydroshikimate + H2O. The protein operates within metabolic intermediate biosynthesis; chorismate biosynthesis; chorismate from D-erythrose 4-phosphate and phosphoenolpyruvate: step 3/7. Its function is as follows. Involved in the third step of the chorismate pathway, which leads to the biosynthesis of aromatic amino acids. Catalyzes the cis-dehydration of 3-dehydroquinate (DHQ) and introduces the first double bond of the aromatic ring to yield 3-dehydroshikimate. The polypeptide is 3-dehydroquinate dehydratase (Staphylococcus epidermidis (strain ATCC 35984 / DSM 28319 / BCRC 17069 / CCUG 31568 / BM 3577 / RP62A)).